We begin with the raw amino-acid sequence, 263 residues long: UPF0739 protein C1orf74 homolog (263 aa).

This sequence belongs to the UPF0739 family.

This is UPF0739 protein C1orf74 homolog from Bos taurus (Bovine).